Here is a 326-residue protein sequence, read N- to C-terminus: Beta-ketoacyl-[acyl-carrier-protein] synthase III (326 aa).

Active-site residues include cysteine 120 and histidine 253. The segment at 254–258 (QANIR) is ACP-binding. Asparagine 283 is a catalytic residue.

It belongs to the thiolase-like superfamily. FabH family. Homodimer.

It is found in the cytoplasm. The enzyme catalyses malonyl-[ACP] + acetyl-CoA + H(+) = 3-oxobutanoyl-[ACP] + CO2 + CoA. It participates in lipid metabolism; fatty acid biosynthesis. Functionally, catalyzes the condensation reaction of fatty acid synthesis by the addition to an acyl acceptor of two carbons from malonyl-ACP. Catalyzes the first condensation reaction which initiates fatty acid synthesis and may therefore play a role in governing the total rate of fatty acid production. Possesses both acetoacetyl-ACP synthase and acetyl transacylase activities. Its substrate specificity determines the biosynthesis of branched-chain and/or straight-chain of fatty acids. The polypeptide is Beta-ketoacyl-[acyl-carrier-protein] synthase III (Ralstonia pickettii (strain 12J)).